The primary structure comprises 254 residues: 23S rRNA (guanosine-2'-O-)-methyltransferase RlmB (254 aa).

S-adenosyl-L-methionine is bound by residues Gly-198, Ile-218, and Leu-227.

The protein belongs to the class IV-like SAM-binding methyltransferase superfamily. RNA methyltransferase TrmH family. RlmB subfamily. In terms of assembly, homodimer.

It is found in the cytoplasm. The enzyme catalyses guanosine(2251) in 23S rRNA + S-adenosyl-L-methionine = 2'-O-methylguanosine(2251) in 23S rRNA + S-adenosyl-L-homocysteine + H(+). Functionally, specifically methylates the ribose of guanosine 2251 in 23S rRNA. This Blochmanniella floridana protein is 23S rRNA (guanosine-2'-O-)-methyltransferase RlmB.